The chain runs to 245 residues: Adapter protein MecA (245 aa).

The protein belongs to the MecA family. In terms of assembly, homodimer.

In terms of biological role, enables the recognition and targeting of unfolded and aggregated proteins to the ClpC protease or to other proteins involved in proteolysis. This is Adapter protein MecA from Streptococcus pneumoniae serotype 19F (strain G54).